A 198-amino-acid chain; its full sequence is Putative peptidyl-prolyl cis-trans isomerase (198 aa).

The 182-residue stretch at 14–195 (NEIKVAMHTN…HDVVIESIDV (182 aa)) folds into the PPIase cyclophilin-type domain.

This sequence belongs to the cyclophilin-type PPIase family.

The catalysed reaction is [protein]-peptidylproline (omega=180) = [protein]-peptidylproline (omega=0). Its function is as follows. PPIases accelerate the folding of proteins. It catalyzes the cis-trans isomerization of proline imidic peptide bonds in oligopeptides. This is Putative peptidyl-prolyl cis-trans isomerase from Staphylococcus haemolyticus (strain JCSC1435).